Reading from the N-terminus, the 265-residue chain is Phosphate import ATP-binding protein PstB (265 aa).

In terms of domain architecture, ABC transporter spans 11–260; that stretch reads VSADEVKIAA…PRDPRTESYI (250 aa). 50–57 lines the ATP pocket; sequence GPSGCGKS.

Belongs to the ABC transporter superfamily. Phosphate importer (TC 3.A.1.7) family. The complex is composed of two ATP-binding proteins (PstB), two transmembrane proteins (PstC and PstA) and a solute-binding protein (PstS).

The protein resides in the cell inner membrane. The catalysed reaction is phosphate(out) + ATP + H2O = ADP + 2 phosphate(in) + H(+). In terms of biological role, part of the ABC transporter complex PstSACB involved in phosphate import. Responsible for energy coupling to the transport system. The sequence is that of Phosphate import ATP-binding protein PstB from Cereibacter sphaeroides (strain ATCC 17023 / DSM 158 / JCM 6121 / CCUG 31486 / LMG 2827 / NBRC 12203 / NCIMB 8253 / ATH 2.4.1.) (Rhodobacter sphaeroides).